A 359-amino-acid polypeptide reads, in one-letter code: MDHLRDSLLSSLPRDSPSIGAMDYARRDRESTRQSVARGDFEELRQAAFYNRTWVVTSRFCDIGAGVDSVEVHVHSLWYIYYELSRHISSQSPEHEGLVLDILRIQGMGPLNRPARGNSGVDIARTVDGTLWTDLPFLVGDMTSFWIEHGATMSGTHRLNLATFLAKLASARVAKDRMCQIALLLFRNVFETSLELRTGDESDGEDLNRGMRQLEVFHLLPAAVAWLKIAAHNLALLSEVCWSDCPSHISQGGEDFLESELGRRSPAGFSPWRYMFWMKRLHEIQGQAKEAGEKTLEELAADGIEYMSNTIQSRNSEIIRAFKSADSALHQDPHLSCLRNLAGFDDDEPEESQEIARES.

Residues 1–32 (MDHLRDSLLSSLPRDSPSIGAMDYARRDREST) are disordered. The span at 7–18 (SLLSSLPRDSPS) shows a compositional bias: low complexity.

Its function is as follows. Part of the gene cluster that mediates the biosynthesis of oxopyrrolidines, polyketide-amino acid hybrid compounds with feature structures of tetramic acid. Does not seem to play a role in oxopyrrolidines A and B biosynthesis. The polypeptide is Oxopyrrolidines biosynthesis cluster protein G (Penicillium oxalicum (strain 114-2 / CGMCC 5302) (Penicillium decumbens)).